The sequence spans 649 residues: Threonine--tRNA ligase (649 aa).

The 60-residue stretch at 1–60 folds into the TGS domain; that stretch reads MHVTLPDGKQLDLQAGATALDVARALGPRLAQDALAALVNGELMDLMTPLPEGAQVRLIT. The tract at residues 248-544 is catalytic; sequence DHRKLGRELE…LIEHYGGDFP (297 aa). Zn(2+) contacts are provided by C341, H392, and H521.

This sequence belongs to the class-II aminoacyl-tRNA synthetase family. In terms of assembly, homodimer. It depends on Zn(2+) as a cofactor.

It is found in the cytoplasm. It catalyses the reaction tRNA(Thr) + L-threonine + ATP = L-threonyl-tRNA(Thr) + AMP + diphosphate + H(+). Its function is as follows. Catalyzes the attachment of threonine to tRNA(Thr) in a two-step reaction: L-threonine is first activated by ATP to form Thr-AMP and then transferred to the acceptor end of tRNA(Thr). Also edits incorrectly charged L-seryl-tRNA(Thr). This chain is Threonine--tRNA ligase, found in Deinococcus geothermalis (strain DSM 11300 / CIP 105573 / AG-3a).